Consider the following 66-residue polypeptide: Large ribosomal subunit protein uL29 (66 aa).

It belongs to the universal ribosomal protein uL29 family.

The sequence is that of Large ribosomal subunit protein uL29 from Thermosipho melanesiensis (strain DSM 12029 / CIP 104789 / BI429).